Reading from the N-terminus, the 125-residue chain is Large ribosomal subunit protein bL12 (125 aa).

It belongs to the bacterial ribosomal protein bL12 family. Homodimer. Part of the ribosomal stalk of the 50S ribosomal subunit. Forms a multimeric L10(L12)X complex, where L10 forms an elongated spine to which 2 to 4 L12 dimers bind in a sequential fashion. Binds GTP-bound translation factors.

Functionally, forms part of the ribosomal stalk which helps the ribosome interact with GTP-bound translation factors. Is thus essential for accurate translation. This chain is Large ribosomal subunit protein bL12, found in Methylorubrum extorquens (strain CM4 / NCIMB 13688) (Methylobacterium extorquens).